Here is a 513-residue protein sequence, read N- to C-terminus: ATP synthase subunit alpha (513 aa).

Residue 169-176 (GDRQTGKT) participates in ATP binding.

Belongs to the ATPase alpha/beta chains family. F-type ATPases have 2 components, CF(1) - the catalytic core - and CF(0) - the membrane proton channel. CF(1) has five subunits: alpha(3), beta(3), gamma(1), delta(1), epsilon(1). CF(0) has three main subunits: a(1), b(2) and c(9-12). The alpha and beta chains form an alternating ring which encloses part of the gamma chain. CF(1) is attached to CF(0) by a central stalk formed by the gamma and epsilon chains, while a peripheral stalk is formed by the delta and b chains.

The protein resides in the cell inner membrane. The catalysed reaction is ATP + H2O + 4 H(+)(in) = ADP + phosphate + 5 H(+)(out). In terms of biological role, produces ATP from ADP in the presence of a proton gradient across the membrane. The alpha chain is a regulatory subunit. This chain is ATP synthase subunit alpha, found in Nitrosomonas europaea (strain ATCC 19718 / CIP 103999 / KCTC 2705 / NBRC 14298).